The following is a 145-amino-acid chain: Protein cornichon homolog 1 (145 aa).

The next 3 helical transmembrane spans lie at 5-25 (FAAFCYLLALIAVGFCIFFAI), 57-77 (IIHGTFTVLFIFSWQLISILA), and 116-136 (LRISWIKLAFYLVSFFYYLYA).

It belongs to the cornichon family. As to quaternary structure, interacts with glr-1. Widely expressed in the nervous system including in the AVA interneurons.

The protein resides in the endoplasmic reticulum membrane. It is found in the synapse. Its subcellular location is the cell projection. The protein localises to the dendrite. Functionally, negatively regulates export of glr-1 from the endoplasmic reticulum to synapses. This Caenorhabditis elegans protein is Protein cornichon homolog 1.